A 140-amino-acid polypeptide reads, in one-letter code: Bacilliredoxin STH2395 (140 aa).

It belongs to the bacilliredoxin family.

The protein is Bacilliredoxin STH2395 of Symbiobacterium thermophilum (strain DSM 24528 / JCM 14929 / IAM 14863 / T).